The following is a 960-amino-acid chain: Dynamin-like GTPase OPA1, mitochondrial (960 aa).

Residues 1-87 (MWRLRRAAVA…IKYGYQPRRN (87 aa)) constitute a mitochondrion transit peptide. Over 88-96 (FWPARLATR) the chain is Mitochondrial matrix. A helical membrane pass occupies residues 97–113 (LLKLRYLILGSAVGGGY). The Mitochondrial intermembrane segment spans residues 114–770 (TAKKTFDQWK…NAIENMVGPD (657 aa)). 2 short sequence motifs (LQQQIQ motif) span residues 181 to 186 (DFFTSG) and 217 to 222 (QLQEEL). Residues 210–254 (SDKEKIDQLQEELLHTQLKYQRILERLEKENKELRKLVLQKDDKG) adopt a coiled-coil conformation. Position 228 is an N6-acetyllysine (Lys228). The LQQQIQ motif signature appears at 235–240 (RLEKEN). One can recognise a Dynamin-type G domain in the interval 285 to 561 (QDHLPRVVVV…FWKMVRESVE (277 aa)). The tract at residues 295–302 (GDQSAGKT) is G1 motif. Residues Ser298, Gly300, Lys301, Thr302, Ser303, and Gly317 each contribute to the GTP site. Thr302 contributes to the Mg(2+) binding site. Residues 321–324 (MMTR) are G2 motif. Mg(2+)-binding residues include Thr323 and Asp398. The segment at 398–401 (DLPG) is G3 motif. The interval 467–470 (TKVD) is G4 motif. 5 residues coordinate GTP: Lys468, Asp470, Thr503, Gly506, and Asn507. The tract at residues 501–504 (VVTG) is G5 motif. Stalk region stretches follow at residues 589 to 836 (DRNE…IKDT) and 874 to 928 (CNDV…IKLL). A paddle region region spans residues 736 to 856 (SDKQQWDAAI…KTALNHCNLC (121 aa)). An intramembrane segment occupies 771-781 (WKKRWLYWKNR). The Mitochondrial intermembrane portion of the chain corresponds to 782–960 (TQEQCVHNET…AFIEALHQEK (179 aa)). A disulfide bond links Cys856 and Cys874. A coiled-coil region spans residues 895–960 (RQQLTNTEVR…AFIEALHQEK (66 aa)).

This sequence belongs to the TRAFAC class dynamin-like GTPase superfamily. Dynamin/Fzo/YdjA family. As to quaternary structure, oligomeric complex consisting of membrane-bound and soluble forms of OPA1. Interacts with RCC1L; RCC1L acts as a guanine nucleotide exchange factor (GEF) for OPA1 by exchanging bound GDP for free GTP. Interacts with CHCHD3 and IMMT; these interactions occur preferentially with soluble OPA1 forms. Interacts with PRELID1. Cleaved by OMA1 or YME1L downstream of the transmembrane region in response to different signals to generate soluble forms. Cleaved by OMA1 at position S1 following stress conditions, generating the short soluble form (Dynamin-like GTPase OPA1, short form; S-OPA1). AFG3L2 is involved in the regulation of OMA1-dependent processing of OPA1. PARL-dependent proteolytic processing releases an antiapoptotic soluble form not required for mitochondrial fusion. In terms of processing, cleavage at position S2 by YME1L is required to mediate oxidative phosphorylation (OXPHOS)-induced mitochondrial fusion. Cleavage occurs in the sequence motif Leu-Gln-Gln-Gln-Ile-Gln (LQQQIQ). Post-translationally, cleavage at position S2 by YME1L is required to mediate oxidative phosphorylation (OXPHOS)-induced mitochondrial fusion. Cleavage occurs in the sequence motif Leu-Gln-Gln-Gln-Ile-Gln (LQQQIQ). Cleavage at position S3 by YME1L is required for membrane tubulation. Cleavage at position S3 by YME1L is required for membrane tubulation. In terms of tissue distribution, highly expressed in retina. Also expressed in brain, testis, heart and skeletal muscle. Low levels of all isoforms expressed in a variety of tissues. As to expression, expressed in retina, skeletal muscle, heart, lung, ovary, colon, thyroid gland, leukocytes and fetal brain. Low levels of all isoforms expressed in a variety of tissues. Isoform 2 expressed in colon, liver, kidney, thyroid gland and leukocytes.

Its subcellular location is the mitochondrion inner membrane. It is found in the mitochondrion intermembrane space. The enzyme catalyses GTP + H2O = GDP + phosphate + H(+). Activated by guanine nucleotide exchange factor RCC1L. Its function is as follows. Dynamin-related GTPase that is essential for normal mitochondrial morphology by mediating fusion of the mitochondrial inner membranes, regulating cristae morphology and maintaining respiratory chain function. Exists in two forms: the transmembrane, long form (Dynamin-like GTPase OPA1, long form; L-OPA1), which is tethered to the inner mitochondrial membrane, and the short soluble form (Dynamin-like GTPase OPA1, short form; S-OPA1), which results from proteolytic cleavage and localizes in the intermembrane space. Both forms (L-OPA1 and S-OPA1) cooperate to catalyze the fusion of the mitochondrial inner membrane. The equilibrium between L-OPA1 and S-OPA1 is essential: excess levels of S-OPA1, produced by cleavage by OMA1 following loss of mitochondrial membrane potential, lead to an impaired equilibrium between L-OPA1 and S-OPA1, inhibiting mitochondrial fusion. The balance between L-OPA1 and S-OPA1 also influences cristae shape and morphology. Involved in remodeling cristae and the release of cytochrome c during apoptosis. Proteolytic processing by PARL in response to intrinsic apoptotic signals may lead to disassembly of OPA1 oligomers and release of the caspase activator cytochrome C (CYCS) into the mitochondrial intermembrane space. Acts as a regulator of T-helper Th17 cells, which are characterized by cells with fused mitochondria with tight cristae, by mediating mitochondrial membrane remodeling: OPA1 is required for interleukin-17 (IL-17) production. Its role in mitochondrial morphology is required for mitochondrial genome maintenance. Functionally, constitutes the transmembrane long form (L-OPA1) that plays a central role in mitochondrial inner membrane fusion and cristae morphology. L-OPA1 and the soluble short form (S-OPA1) form higher-order helical assemblies that coordinate the fusion of mitochondrial inner membranes. Inner membrane-anchored L-OPA1 molecules initiate membrane remodeling by recruiting soluble S-OPA1 to rapidly polymerize into a flexible cylindrical scaffold encaging the mitochondrial inner membrane. Once at the membrane surface, the formation of S-OPA1 helices induce bilayer curvature. OPA1 dimerization through the paddle region, which inserts into cardiolipin-containing membrane, promotes GTP hydrolysis and the helical assembly of a flexible OPA1 lattice on the membrane, which drives membrane curvature and mitochondrial fusion. Plays a role in the maintenance and remodeling of mitochondrial cristae, some invaginations of the mitochondrial inner membrane that provide an increase in the surface area. Probably acts by forming helical filaments at the inside of inner membrane tubes with the shape and dimensions of crista junctions. The equilibrium between L-OPA1 and S-OPA1 influences cristae shape and morphology: increased L-OPA1 levels promote cristae stacking and elongated mitochondria, while increased S-OPA1 levels correlated with irregular cristae packing and round mitochondria shape. In terms of biological role, constitutes the soluble short form (S-OPA1) generated by cleavage by OMA1, which plays a central role in mitochondrial inner membrane fusion and cristae morphology. The transmembrane long form (L-OPA1) and the S-OPA1 form higher-order helical assemblies that coordinate the fusion of mitochondrial inner membranes. Inner membrane-anchored L-OPA1 molecules initiate membrane remodeling by recruiting soluble S-OPA1 to rapidly polymerize into a flexible cylindrical scaffold encaging the mitochondrial inner membrane. Once at the membrane surface, the formation of S-OPA1 helices induce bilayer curvature. OPA1 dimerization through the paddle region, which inserts into cardiolipin-containing membrane, promotes GTP hydrolysis and the helical assembly of a flexible OPA1 lattice on the membrane, which drives membrane curvature and mitochondrial fusion. Excess levels of S-OPA1 produced by cleavage by OMA1 following stress conditions that induce loss of mitochondrial membrane potential, lead to an impaired equilibrium between L-OPA1 and S-OPA1, thereby inhibiting mitochondrial fusion. Involved in mitochondrial safeguard in response to transient mitochondrial membrane depolarization by mediating flickering: cleavage by OMA1 leads to excess production of S-OPA1, preventing mitochondrial hyperfusion. Plays a role in the maintenance and remodeling of mitochondrial cristae, some invaginations of the mitochondrial inner membrane that provide an increase in the surface area. Probably acts by forming helical filaments at the inside of inner membrane tubes with the shape and dimensions of crista junctions. The equilibrium between L-OPA1 and S-OPA1 influences cristae shape and morphology: increased L-OPA1 levels promote cristae stacking and elongated mitochondria, while increased S-OPA1 levels correlated with irregular cristae packing and round mitochondria shape. Coexpression of isoform 1 with shorter alternative products is required for optimal activity in promoting mitochondrial fusion. Its function is as follows. Isoforms that contain the alternative exon 4b are required for mitochondrial genome maintenance, possibly by anchoring the mitochondrial nucleoids to the inner mitochondrial membrane. This Homo sapiens (Human) protein is Dynamin-like GTPase OPA1, mitochondrial.